Consider the following 264-residue polypeptide: Orotidine 5'-phosphate decarboxylase (264 aa).

Residues Asp40, Lys62–His64, Asp93–Thr102, Tyr214, and Arg233 contribute to the substrate site. Catalysis depends on Lys95, which acts as the Proton donor.

Belongs to the OMP decarboxylase family.

The enzyme catalyses orotidine 5'-phosphate + H(+) = UMP + CO2. It functions in the pathway pyrimidine metabolism; UMP biosynthesis via de novo pathway; UMP from orotate: step 2/2. The polypeptide is Orotidine 5'-phosphate decarboxylase (ura4) (Schizosaccharomyces pombe (strain 972 / ATCC 24843) (Fission yeast)).